Reading from the N-terminus, the 383-residue chain is UDP-N-acetylenolpyruvoylglucosamine reductase (383 aa).

The FAD-binding PCMH-type domain maps to leucine 42 to aspartate 212. Arginine 189 is a catalytic residue. The active-site Proton donor is the serine 267. Glutamate 369 is a catalytic residue.

The protein belongs to the MurB family. It depends on FAD as a cofactor.

The protein localises to the cytoplasm. It carries out the reaction UDP-N-acetyl-alpha-D-muramate + NADP(+) = UDP-N-acetyl-3-O-(1-carboxyvinyl)-alpha-D-glucosamine + NADPH + H(+). The protein operates within cell wall biogenesis; peptidoglycan biosynthesis. Its function is as follows. Cell wall formation. In Psychrobacter sp. (strain PRwf-1), this protein is UDP-N-acetylenolpyruvoylglucosamine reductase.